Consider the following 838-residue polypeptide: Ribonuclease Z (838 aa).

Position 824 is a phosphoserine (S824).

The protein belongs to the RNase Z family. In terms of assembly, homodimer. It depends on Zn(2+) as a cofactor.

Its subcellular location is the cytoplasm. The protein localises to the nucleus. The catalysed reaction is Endonucleolytic cleavage of RNA, removing extra 3' nucleotides from tRNA precursor, generating 3' termini of tRNAs. A 3'-hydroxy group is left at the tRNA terminus and a 5'-phosphoryl group is left at the trailer molecule.. Functionally, zinc phosphodiesterase, which displays some tRNA 3'-processing endonuclease activity. Probably involved in tRNA maturation, by removing a 3'-trailer from precursor tRNA. This is Ribonuclease Z (TRZ1) from Saccharomyces cerevisiae (strain ATCC 204508 / S288c) (Baker's yeast).